The chain runs to 424 residues: Serine hydroxymethyltransferase (424 aa).

Residues Leu-118 and 122–124 each bind (6S)-5,6,7,8-tetrahydrofolate; that span reads GHL. Lys-227 is subject to N6-(pyridoxal phosphate)lysine. 351 to 353 contacts (6S)-5,6,7,8-tetrahydrofolate; that stretch reads SPF.

The protein belongs to the SHMT family. As to quaternary structure, homodimer. The cofactor is pyridoxal 5'-phosphate.

It is found in the cytoplasm. It catalyses the reaction (6R)-5,10-methylene-5,6,7,8-tetrahydrofolate + glycine + H2O = (6S)-5,6,7,8-tetrahydrofolate + L-serine. The protein operates within one-carbon metabolism; tetrahydrofolate interconversion. It participates in amino-acid biosynthesis; glycine biosynthesis; glycine from L-serine: step 1/1. Its function is as follows. Catalyzes the reversible interconversion of serine and glycine with tetrahydrofolate (THF) serving as the one-carbon carrier. This reaction serves as the major source of one-carbon groups required for the biosynthesis of purines, thymidylate, methionine, and other important biomolecules. Also exhibits THF-independent aldolase activity toward beta-hydroxyamino acids, producing glycine and aldehydes, via a retro-aldol mechanism. The chain is Serine hydroxymethyltransferase from Pseudothermotoga lettingae (strain ATCC BAA-301 / DSM 14385 / NBRC 107922 / TMO) (Thermotoga lettingae).